A 414-amino-acid polypeptide reads, in one-letter code: Serine hydroxymethyltransferase (414 aa).

Residues Leu121 and Gly125 to Leu127 contribute to the (6S)-5,6,7,8-tetrahydrofolate site. Lys229 is subject to N6-(pyridoxal phosphate)lysine.

Belongs to the SHMT family. In terms of assembly, homodimer. Pyridoxal 5'-phosphate is required as a cofactor.

It is found in the cytoplasm. The catalysed reaction is (6R)-5,10-methylene-5,6,7,8-tetrahydrofolate + glycine + H2O = (6S)-5,6,7,8-tetrahydrofolate + L-serine. Its pathway is one-carbon metabolism; tetrahydrofolate interconversion. It participates in amino-acid biosynthesis; glycine biosynthesis; glycine from L-serine: step 1/1. Catalyzes the reversible interconversion of serine and glycine with tetrahydrofolate (THF) serving as the one-carbon carrier. This reaction serves as the major source of one-carbon groups required for the biosynthesis of purines, thymidylate, methionine, and other important biomolecules. Also exhibits THF-independent aldolase activity toward beta-hydroxyamino acids, producing glycine and aldehydes, via a retro-aldol mechanism. The chain is Serine hydroxymethyltransferase from Polynucleobacter necessarius subsp. necessarius (strain STIR1).